Here is a 446-residue protein sequence, read N- to C-terminus: Divalent metal cation transporter MntH (446 aa).

The next 11 helical transmembrane spans lie at Leu-32–Ile-52, Ala-59–Leu-79, Ala-107–Ile-127, Ile-139–Met-159, Ala-168–Ser-188, Ile-205–Pro-225, Ser-264–Val-284, Pro-303–Ala-323, Leu-355–Asn-375, Gln-381–Leu-401, and Val-420–Ile-440.

Belongs to the NRAMP family.

The protein localises to the cell membrane. Its function is as follows. H(+)-stimulated, divalent metal cation uptake system. In Staphylococcus haemolyticus (strain JCSC1435), this protein is Divalent metal cation transporter MntH.